Reading from the N-terminus, the 727-residue chain is MGRRAKMVEKVKTLMEKHDQIRNMGICAHIDHGKTTLSDNLLAGAGMISKELAGDQLALDFDEEEAARGITIYAANVSMVHEYNGKEYLINLIDTPGHVDFGGDVTRAMRAIDGAVVVCCAVEGVMPQTETVLRQALKEKVKPVLFINKVDRLINELKLTPEELQGRFMKIIAEVNKLIEKMAPEEFKKDWLCDVVTGKVAFGSAYNNWAISVPYMQRSGISFKDIIDYCEQEKQGELADRAPLHEVILDMAITHLPNPLQAQKYRIPNIWKGDSESTIGKSMVACDPNGPLAGVVTKIIVDKHAGAISACRLFSGRIKQGDDLYLVGSKQKARAQQVSIFMGAERVQVPSISAGNICALTGLREATAGETVCSPSEILEPGFESLTHTSEPVITVAIEAKNTKDLPKLIEILRQIAREDNTVRVEINEETGEHLISGMGELHIEVITNTKIGRDGGIEVDVGEPIVVYRETITGTSPEIEGKSPNKHNKLYMIAEPMDESVYAAYVEGKIHDEDYKKKTTADGEARLVEAGLEKEQAKRVMSIYNGNMIVNMTRGIVQLDEARELIIEGFKEGVRNGPLAAEKVQGVKIRLVDATFHEDAIHRGPAQIIPAVRFGVRDAVAQAKPVLLEPMQSVYINTPQDYMGDGMKEINNRRGQILDMEQEGDMSIIKSSVPVAEMFGFAGAIRGATQGRCLWSVEFSGFERVPAELQPKIAKQIRDRKGLKSE.

The tr-type G domain occupies 19 to 260; that stretch reads DQIRNMGICA…MAITHLPNPL (242 aa). GTP contacts are provided by residues 28–35, 94–98, and 148–151; these read AHIDHGKT, DTPGH, and NKVD. His603 carries the diphthamide modification.

Belongs to the TRAFAC class translation factor GTPase superfamily. Classic translation factor GTPase family. EF-G/EF-2 subfamily.

It is found in the cytoplasm. Catalyzes the GTP-dependent ribosomal translocation step during translation elongation. During this step, the ribosome changes from the pre-translocational (PRE) to the post-translocational (POST) state as the newly formed A-site-bound peptidyl-tRNA and P-site-bound deacylated tRNA move to the P and E sites, respectively. Catalyzes the coordinated movement of the two tRNA molecules, the mRNA and conformational changes in the ribosome. The sequence is that of Elongation factor 2 from Methanococcus maripaludis (strain C6 / ATCC BAA-1332).